The chain runs to 89 residues: Large ribosomal subunit protein bL27 (89 aa).

The interval 1–22 (MAHTKKGGSSRNGRDSESKRLG) is disordered.

It belongs to the bacterial ribosomal protein bL27 family.

The sequence is that of Large ribosomal subunit protein bL27 from Brucella melitensis biotype 1 (strain ATCC 23456 / CCUG 17765 / NCTC 10094 / 16M).